Consider the following 506-residue polypeptide: Pentatricopeptide repeat-containing protein At5g18475 (506 aa).

The tract at residues 28–48 (SEKKKKPSPPPESSISPVETN) is disordered. PPR repeat units follow at residues 88-122 (NNAT…TCRF), 123-158 (QESL…RVKP), 159-194 (SLNA…GLQP), 195-229 (NTCI…GISY), 231-266 (NSIT…GISP), 267-301 (DPVT…GCNP), 302-336 (NVYN…GLKL), 337-371 (DTVG…RCRA), 372-406 (DTLT…GVHL), 407-441 (NKGS…GIWP), 442-476 (HHAT…GLIP), and 477-506 (GPKS…SLVS).

The protein belongs to the PPR family. P subfamily.

The polypeptide is Pentatricopeptide repeat-containing protein At5g18475 (Arabidopsis thaliana (Mouse-ear cress)).